The following is a 301-amino-acid chain: D-alanine--D-alanine ligase A (301 aa).

The 195-residue stretch at 99–293 (KRILAFGNVR…FEELLDTIIE (195 aa)) folds into the ATP-grasp domain. ATP is bound at residue 126–181 (IENLGYPVFVKPNNGGSSVATTLVESKEAVKDAVLEALKYDTEVMIEEYIKGDEIT). 3 residues coordinate Mg(2+): aspartate 248, glutamate 260, and asparagine 262.

Belongs to the D-alanine--D-alanine ligase family. Requires Mg(2+) as cofactor. Mn(2+) is required as a cofactor.

The protein resides in the cytoplasm. The catalysed reaction is 2 D-alanine + ATP = D-alanyl-D-alanine + ADP + phosphate + H(+). The protein operates within cell wall biogenesis; peptidoglycan biosynthesis. Cell wall formation. In Clostridium perfringens (strain 13 / Type A), this protein is D-alanine--D-alanine ligase A.